Consider the following 575-residue polypeptide: MAQISESAAIPRRTANHHGNVWDDDLILSLDSPYGAPAYYERVANLIEEMKHLLLREMEDSNHDLIRRLQIVDTLECLGIDRHFQHEIKTAALDYVYRCWNEKGIGMGSSDSGSKDLDATALGLRALRLHRYNVSSGVLENFKDENGKFFCNLTGDKRVRSMLSLLRASEISFPGEKVMQEAKAFTREYLTQVLAGRGDVTDVDQSLLREVKYALEFPWHWSVPRWEARSFIEIYGQNHSWLKSNINQKVLELAKLDFNILQCIHQKEIQFIVRWWRESEIAQLNFYRKRHVEFYFWVVICIFEPEFSQSRIAFAKICTVATVLDDLYDTHGMLDELKTVTEGVSRWDLPLIDDLPDNIKIAFQFFFNTANELAVEVVKKQGRDMIALLKANWQRYVESYLQEAEWIATRHVPSFDEYIKNARASSGMCIGNLIPLLLLGQLLANNIVEQIHSPSKIQELSELTIRLIDDIRDFEDEKERGEIASAIECYMKDNPDSTVENALNHLEGILHLSLEELNWEFIKQDTVPLCCKKFTFNIVRGLQFVYKYGDGLSISNKEVKDQIFKILIDQVPIEE.

Residues Arg-288, Asp-325, Asp-329, Arg-466, and Asp-469 each coordinate (2E,6E)-farnesyl diphosphate. The Mg(2+) site is built by Asp-325 and Asp-329. Positions 325-329 (DDLYD) match the DDXXD motif motif. Asp-469 and Glu-477 together coordinate Mg(2+).

Belongs to the terpene synthase family. Tpsb subfamily. As to quaternary structure, monomer. The cofactor is Mg(2+). Requires Mn(2+) as cofactor.

Its subcellular location is the plastid. It is found in the chloroplast. The enzyme catalyses (2E,6E)-farnesyl diphosphate = (+)-delta-selinene + diphosphate. It participates in secondary metabolite biosynthesis; terpenoid biosynthesis. Its pathway is terpene metabolism; oleoresin biosynthesis. Sesquiterpene synthase (sesqui-TPS) involved in the biosynthesis of sesquiterpene natural products. Catalyzes the conversion of (2E)-geranyl diphosphate (GPP) into delta-selinene. The polypeptide is Delta-selinene-like synthase, chloroplastic (Picea sitchensis (Sitka spruce)).